Reading from the N-terminus, the 515-residue chain is Maturase K (515 aa).

Belongs to the intron maturase 2 family. MatK subfamily.

It is found in the plastid. Its subcellular location is the chloroplast. Usually encoded in the trnK tRNA gene intron. Probably assists in splicing its own and other chloroplast group II introns. The polypeptide is Maturase K (Pinus pinea (Italian stone pine)).